A 497-amino-acid chain; its full sequence is IWS1-like protein (497 aa).

The segment at 1 to 191 (MSDHEGASPA…SDRRGGRNFE (191 aa)) is disordered. 2 stretches are compositionally biased toward low complexity: residues 7–23 (ASPA…PVSP) and 47–57 (PLAPRSPASPR). 3 stretches are compositionally biased toward basic and acidic residues: residues 123-134 (EGDKQQKRKDLF), 144-160 (DRPK…VKGD), and 181-191 (PSDRRGGRNFE). A TFIIS N-terminal domain is found at 281–361 (SALSEWLAPL…GEWARPIYHL (81 aa)). A disordered region spans residues 369–433 (SRQEREERDY…GDKGYINRAR (65 aa)). Basic and acidic residues-rich tracts occupy residues 370–382 (RQER…SRMP) and 401–411 (APKRPRIRDAE).

This sequence belongs to the IWS1 family.

The protein localises to the nucleus. This chain is IWS1-like protein, found in Caenorhabditis briggsae.